The following is a 1364-amino-acid chain: Toxin subunit YenA2 (1364 aa).

The stretch at 1025–1080 (SESYRRRRQEWELQYKQAEWEVNSVEQQINLQNMQIKAANKRLEQVEAQQQQAMAL) forms a coiled coil.

Semipurified toxin complex consists of at least YenA1-YenA2-YenB-YenC1-YenC2-Chi1-Chi2. The Yen-TC:K9 subcomplex is about 26 nm tall and 22 nm in diameter with 5-fold symmetry and 5 copies of YenA1, YenA2, Chi1 and Chi2; the chitinase subunits may be solvent accessible on the exterior the complex. The Yen-TC:K9 subcomplex has no insecticidal activity. The native complex with additional YenB, YenC1 and YenC2 subunits is 16 nm taller and is insecticidal; the toxicity-conferring subunits are present at about 1 copy each. The isolated toxin complex includes 3 peptides starting between residues 768 and 778 of this protein, which might be physiologically relevant.

Its subcellular location is the secreted. Functionally, part of an orally active toxin complex (TC) with strong insecticidal effects on larvae of the Coleoptera Costelytra zealandica, Acrossidius tasmania and Adoryphorus couloni and some Lepidoptera larvae. The TC has an endochitinase activity. The polypeptide is Toxin subunit YenA2 (Yersinia entomophaga).